A 338-amino-acid chain; its full sequence is Nickel transporter NixA (338 aa).

Transmembrane regions (helical) follow at residues 11–31 (WLPYIAIVILLHVIGFSFLWI), 37–57 (HILFGMGILAYTLGLRHAFDA), 79–99 (GVGFYFSIGHSSVVFLMAVFL), 127–147 (FFLVLIGVLNLIILISLINLF), 187–207 (VLPLGFLFGLGFDTASEIALL), 217–237 (AISFIGILSLPILFASGMSLL), 266–286 (ITAISVMAALVIGMIELLQIL), and 307–327 (YLGYILVALFLITWLISSLIW).

This sequence belongs to the NiCoT transporter (TC 2.A.52) family.

Its subcellular location is the cell membrane. Secondary nickel transporter. Required for full urease activity. The polypeptide is Nickel transporter NixA (Staphylococcus aureus (strain NCTC 8325 / PS 47)).